A 204-amino-acid chain; its full sequence is Imidazole glycerol phosphate synthase subunit HisH (204 aa).

In terms of domain architecture, Glutamine amidotransferase type-1 spans 5 to 204 (KVVIIDTGCA…AKLIQNFLEL (200 aa)). Residue Cys80 is the Nucleophile of the active site. Catalysis depends on residues His186 and Glu188.

As to quaternary structure, heterodimer of HisH and HisF.

The protein localises to the cytoplasm. The enzyme catalyses 5-[(5-phospho-1-deoxy-D-ribulos-1-ylimino)methylamino]-1-(5-phospho-beta-D-ribosyl)imidazole-4-carboxamide + L-glutamine = D-erythro-1-(imidazol-4-yl)glycerol 3-phosphate + 5-amino-1-(5-phospho-beta-D-ribosyl)imidazole-4-carboxamide + L-glutamate + H(+). The catalysed reaction is L-glutamine + H2O = L-glutamate + NH4(+). It participates in amino-acid biosynthesis; L-histidine biosynthesis; L-histidine from 5-phospho-alpha-D-ribose 1-diphosphate: step 5/9. Its function is as follows. IGPS catalyzes the conversion of PRFAR and glutamine to IGP, AICAR and glutamate. The HisH subunit catalyzes the hydrolysis of glutamine to glutamate and ammonia as part of the synthesis of IGP and AICAR. The resulting ammonia molecule is channeled to the active site of HisF. This Vibrio parahaemolyticus serotype O3:K6 (strain RIMD 2210633) protein is Imidazole glycerol phosphate synthase subunit HisH.